Here is a 453-residue protein sequence, read N- to C-terminus: Cysteine desulfurase, mitochondrial (453 aa).

Residues 1–34 (MASKVISATIRRTLTKPHGTFSRCRYLSTAAAAT) constitute a mitochondrion transit peptide. Residues 123 to 124 (AT), N203, Q231, and 251 to 253 (SAH) contribute to the pyridoxal 5'-phosphate site. Position 254 is an N6-(pyridoxal phosphate)lysine (K254). A pyridoxal 5'-phosphate-binding site is contributed by T291. Residue C377 is the Cysteine persulfide intermediate of the active site. Position 377 (C377) interacts with [2Fe-2S] cluster.

The protein belongs to the class-V pyridoxal-phosphate-dependent aminotransferase family. NifS/IscS subfamily. In terms of assembly, interacts with FH. Interacts with SUFE1. Requires pyridoxal 5'-phosphate as cofactor.

It localises to the mitochondrion. It carries out the reaction (sulfur carrier)-H + L-cysteine = (sulfur carrier)-SH + L-alanine. With respect to regulation, threefold increase in the catalytic activity in the presence of FH (frataxin). 30-fold increase in the catalytic activity in the presence of SUFE1. Functionally, catalyzes the removal of elemental sulfur from cysteine to produce alanine. Supplies the inorganic sulfur for iron-sulfur (Fe-S) clusters. The chain is Cysteine desulfurase, mitochondrial from Arabidopsis thaliana (Mouse-ear cress).